Consider the following 740-residue polypeptide: Phosphoribosylformylglycinamidine synthase subunit PurL (740 aa).

H53 is a catalytic residue. The ATP site is built by Y56 and K95. Residue E97 coordinates Mg(2+). Substrate is bound by residues 98–101 and R120; that span reads SHNH. H99 serves as the catalytic Proton acceptor. Mg(2+) is bound at residue D121. Q244 provides a ligand contact to substrate. Mg(2+) is bound at residue D274. Residue 318–320 coordinates substrate; it reads ESQ. ATP contacts are provided by D501 and G538. N539 contributes to the Mg(2+) binding site. S541 is a substrate binding site.

It belongs to the FGAMS family. Monomer. Part of the FGAM synthase complex composed of 1 PurL, 1 PurQ and 2 PurS subunits.

It localises to the cytoplasm. It catalyses the reaction N(2)-formyl-N(1)-(5-phospho-beta-D-ribosyl)glycinamide + L-glutamine + ATP + H2O = 2-formamido-N(1)-(5-O-phospho-beta-D-ribosyl)acetamidine + L-glutamate + ADP + phosphate + H(+). It participates in purine metabolism; IMP biosynthesis via de novo pathway; 5-amino-1-(5-phospho-D-ribosyl)imidazole from N(2)-formyl-N(1)-(5-phospho-D-ribosyl)glycinamide: step 1/2. Functionally, part of the phosphoribosylformylglycinamidine synthase complex involved in the purines biosynthetic pathway. Catalyzes the ATP-dependent conversion of formylglycinamide ribonucleotide (FGAR) and glutamine to yield formylglycinamidine ribonucleotide (FGAM) and glutamate. The FGAM synthase complex is composed of three subunits. PurQ produces an ammonia molecule by converting glutamine to glutamate. PurL transfers the ammonia molecule to FGAR to form FGAM in an ATP-dependent manner. PurS interacts with PurQ and PurL and is thought to assist in the transfer of the ammonia molecule from PurQ to PurL. This chain is Phosphoribosylformylglycinamidine synthase subunit PurL, found in Lactobacillus delbrueckii subsp. bulgaricus (strain ATCC 11842 / DSM 20081 / BCRC 10696 / JCM 1002 / NBRC 13953 / NCIMB 11778 / NCTC 12712 / WDCM 00102 / Lb 14).